Reading from the N-terminus, the 155-residue chain is SsrA-binding protein (155 aa).

The protein belongs to the SmpB family.

Its subcellular location is the cytoplasm. In terms of biological role, required for rescue of stalled ribosomes mediated by trans-translation. Binds to transfer-messenger RNA (tmRNA), required for stable association of tmRNA with ribosomes. tmRNA and SmpB together mimic tRNA shape, replacing the anticodon stem-loop with SmpB. tmRNA is encoded by the ssrA gene; the 2 termini fold to resemble tRNA(Ala) and it encodes a 'tag peptide', a short internal open reading frame. During trans-translation Ala-aminoacylated tmRNA acts like a tRNA, entering the A-site of stalled ribosomes, displacing the stalled mRNA. The ribosome then switches to translate the ORF on the tmRNA; the nascent peptide is terminated with the 'tag peptide' encoded by the tmRNA and targeted for degradation. The ribosome is freed to recommence translation, which seems to be the essential function of trans-translation. The chain is SsrA-binding protein from Streptococcus agalactiae serotype Ia (strain ATCC 27591 / A909 / CDC SS700).